Reading from the N-terminus, the 663-residue chain is Syntabulin (663 aa).

Disordered regions lie at residues 1-202 (MGPL…PREK) and 216-267 (VNIH…PEQY). Positions 2 to 417 (GPLRESKKEH…DTMADGLSLE (416 aa)) are sufficient for interaction with KIF5B. At Ser50 the chain carries Phosphoserine. The span at 57–73 (FNPSSSGRSARTVSSNS) shows a compositional bias: low complexity. Positions 81 to 97 (CPSSQSVSPVKTPSDAG) are enriched in polar residues. Ser107 is modified (phosphoserine). 3 stretches are compositionally biased toward low complexity: residues 145-158 (EADF…GSIS), 188-198 (SSHKPGSSPSS), and 221-241 (SYAP…SDCS). The stretch at 271–353 (LQQKEVTVRH…MRSSLADKDK (83 aa)) forms a coiled coil. The sufficient for interaction with STX1A stretch occupies residues 310-417 (REDWIEEECH…DTMADGLSLE (108 aa)). Phosphoserine is present on residues Ser396 and Ser555. The chain crosses the membrane as a helical span at residues 606–626 (SFLVDLLAVAAPVVPTVLWAF).

As to quaternary structure, interacts with STX1A and KIF5B. In terms of tissue distribution, isoform 3, isoform 4 and isoform 5 are expressed in HeLa cell line (at protein level). Isoform 3 is expressed in fetal and adult brain. Isoform 4 is expressed in numerous fetal tissues (brain, kidney, liver, lung, and thymus) and in adult brain, kidney, liver, lung, pancreas, colon, prostate, small intestine, testis and thymus. Isoform 5 is expressed in fetal brain, brain and small intestine.

Its subcellular location is the cytoplasm. It is found in the cytoskeleton. The protein localises to the cytoplasmic vesicle. The protein resides in the golgi apparatus membrane. Part of a kinesin motor-adapter complex that is critical for the anterograde axonal transport of active zone components and contributes to activity-dependent presynaptic assembly during neuronal development. This chain is Syntabulin (SYBU), found in Homo sapiens (Human).